We begin with the raw amino-acid sequence, 341 residues long: Serine/threonine-protein kinase-like protein At5g23170 (341 aa).

Residues 16–298 form the Protein kinase domain; the sequence is FSPSKLIGKG…FGEITAEIVA (283 aa). ATP is bound by residues 22–30 and Lys51; that span reads IGKGSHGYV. The segment at 52-75 is disordered; sequence TPSSLSPSSPSSSSSSKSEQTKKL. Positions 53–69 are enriched in low complexity; that stretch reads PSSLSPSSPSSSSSSKS. Asp153 (proton acceptor) is an active-site residue. Positions 311–332 form a coiled coil; it reads MSVLRRVVKLKRRKKRLRETLT.

This sequence belongs to the protein kinase superfamily. Ser/Thr protein kinase family. In terms of tissue distribution, ubiquitous. Higher expression in mature stamina and pollen.

It catalyses the reaction L-seryl-[protein] + ATP = O-phospho-L-seryl-[protein] + ADP + H(+). The enzyme catalyses L-threonyl-[protein] + ATP = O-phospho-L-threonyl-[protein] + ADP + H(+). The sequence is that of Serine/threonine-protein kinase-like protein At5g23170 from Arabidopsis thaliana (Mouse-ear cress).